Consider the following 203-residue polypeptide: Lectin (203 aa).

The N-terminal stretch at 1–20 (MINILHVIAGLALASVGVDA) is a signal peptide. The propeptide occupies 21–53 (RQVGVGADVLHAVENTIDSITGVEASHSALEVG).

In terms of assembly, monomer.

Its function is as follows. N-acetyl-D-glucosamine-specific lectin. Specifically agglutinates rabbit erythrocytes. This is Lectin (UPL1) from Ulva pertusa (Sea lettuce).